The chain runs to 145 residues: RxLR effector protein BLR40 (145 aa).

The signal sequence occupies residues 1-22 (MLLSRAISVVALLACICCGVHT). Residues 44-58 (RRLRTSVDLVDNEER) carry the RxLR-dEER motif.

The protein belongs to the RxLR effector family.

It is found in the secreted. The protein resides in the host cell membrane. Its function is as follows. Secreted effector that triggers a robust hypersensitive response (HR) in Lactuca sativa cv. Design that is resistant to multiple B.lactucae races, including Bl:24. The polypeptide is RxLR effector protein BLR40 (Bremia lactucae (Lettuce downy mildew)).